The sequence spans 246 residues: Glandular kallikrein (246 aa).

A propeptide spanning residues 1–7 (APPIQSR) is cleaved from the precursor. The Peptidase S1 domain occupies 8-243 (IIGGRECEKN…YLDWINDTIT (236 aa)). 5 disulfide bridges follow: C14–C158, C33–C49, C135–C204, C169–C183, and C194–C219. The Charge relay system role is filled by H48. A glycan (N-linked (GlcNAc...) asparagine) is linked at N85. A kallikrein (autolysis) loop region spans residues 85–104 (NLSLLKXHTKADGKDYSHDL). D103 functions as the Charge relay system in the catalytic mechanism. The active-site Charge relay system is S198. A glycan (N-linked (GlcNAc...) asparagine) is linked at N239.

Belongs to the peptidase S1 family. Kallikrein subfamily. Monomer.

It carries out the reaction Preferential cleavage of Arg-|-Xaa bonds in small molecule substrates. Highly selective action to release kallidin (lysyl-bradykinin) from kininogen involves hydrolysis of Met-|-Xaa or Leu-|-Xaa.. Glandular kallikreins cleave Met-Lys and Arg-Ser bonds in kininogen to release Lys-bradykinin. This is Glandular kallikrein from Sus scrofa (Pig).